A 403-amino-acid chain; its full sequence is Soluble calcium-activated nucleotidase 1 (403 aa).

Over Met-1–Arg-44 the chain is Cytoplasmic. The chain crosses the membrane as a helical; Signal-anchor for type II membrane protein span at residues Val-45–Ser-61. The Lumenal segment spans residues His-62–Ile-403. The N-linked (GlcNAc...) asparagine glycan is linked to Asn-90. The Ca(2+) site is built by Ser-170, Asp-171, Glu-217, Glu-286, Ser-347, and Glu-398.

This sequence belongs to the apyrase family. Monomer. Homodimer; dimerization is Ca(2+)-dependent. Ca(2+) is required as a cofactor.

It localises to the endoplasmic reticulum membrane. The protein localises to the golgi apparatus. Its subcellular location is the golgi stack membrane. The enzyme catalyses a ribonucleoside 5'-diphosphate + H2O = a ribonucleoside 5'-phosphate + phosphate + H(+). Its function is as follows. Calcium-dependent nucleotidase with a preference for UDP. The order of activity with different substrates is UDP &gt; GDP &gt; IDP &gt;&gt; UTP &gt; CDP = GTP = ITP. Has very low activity towards ADP and even lower activity towards ATP. Does not hydrolyze AMP and GMP. Involved in proteoglycan synthesis. The protein is Soluble calcium-activated nucleotidase 1 (Cant1) of Mus musculus (Mouse).